Consider the following 215-residue polypeptide: Large ribosomal subunit protein uL4c (215 aa).

Residues 48 to 57 (SQRQGTISTK) are compositionally biased toward polar residues. The segment at 48–85 (SQRQGTISTKTRSEVRGGGRKPWRQKGTGRARAGSSRS) is disordered. Residues 65–76 (GGRKPWRQKGTG) are compositionally biased toward basic residues.

It belongs to the universal ribosomal protein uL4 family. As to quaternary structure, part of the 50S ribosomal subunit.

Its subcellular location is the plastid. The protein localises to the chloroplast. Functionally, probably binds the 23S rRNA. The protein is Large ribosomal subunit protein uL4c (rpl4) of Trieres chinensis (Marine centric diatom).